A 132-amino-acid polypeptide reads, in one-letter code: Small ribosomal subunit protein uS8 (132 aa).

The protein belongs to the universal ribosomal protein uS8 family. Part of the 30S ribosomal subunit. Contacts proteins S5 and S12.

Functionally, one of the primary rRNA binding proteins, it binds directly to 16S rRNA central domain where it helps coordinate assembly of the platform of the 30S subunit. This chain is Small ribosomal subunit protein uS8, found in Acidobacterium capsulatum (strain ATCC 51196 / DSM 11244 / BCRC 80197 / JCM 7670 / NBRC 15755 / NCIMB 13165 / 161).